A 284-amino-acid chain; its full sequence is Nucleotide-binding protein PputGB1_0956 (284 aa).

ATP is bound at residue 8-15; it reads GRSGSGKS. A GTP-binding site is contributed by 60 to 63; sequence DARN.

It belongs to the RapZ-like family.

Functionally, displays ATPase and GTPase activities. The polypeptide is Nucleotide-binding protein PputGB1_0956 (Pseudomonas putida (strain GB-1)).